A 154-amino-acid chain; its full sequence is Small heat shock protein C2 (154 aa).

A sHSP domain is found at S43–G154.

The protein belongs to the small heat shock protein (HSP20) family.

In Rickettsia felis (strain ATCC VR-1525 / URRWXCal2) (Rickettsia azadi), this protein is Small heat shock protein C2 (hspC2).